The primary structure comprises 104 residues: 2,4-dinitrotoluene dioxygenase system, ferredoxin component (104 aa).

A disordered region spans residues 1–21 (MSENWIDAAARDEVPRGRRDR). Residues 5-101 (WIDAAARDEV…VKIENMRVML (97 aa)) form the Rieske domain. [2Fe-2S] cluster is bound by residues C45, H47, C64, and H67.

It belongs to the bacterial ring-hydroxylating dioxygenase ferredoxin component family. As to quaternary structure, the 2,4-dinitrotoluene dioxygenase (DNTDO) multicomponent enzyme system is composed of an electron transfer component and a dioxygenase component (iron sulfur protein (ISP)). The electron transfer component is composed of a ferredoxin reductase (DntAa) and a ferredoxin (DntAb), and the dioxygenase component is formed of a large alpha subunit (DntAc) and a small beta subunit (DntAd). [2Fe-2S] cluster is required as a cofactor.

Component of the 2,4-dinitrotoluene dioxygenase (DNTDO) multicomponent enzyme system which catalyzes the incorporation of both atoms of molecular oxygen into 2,4-dinitrotoluene (DNT) to form 4-methyl-5-nitrocatechol (MNC) and nitrite. Functions as an intermediate electron transfer protein via a specific interaction with iron sulfur protein components (ISP)(DntAc and DntAd). Also able to convert naphthalene to cis-(1R,2S)-dihydroxy-1,2-dihydronaphthalene. In Burkholderia sp. (strain RASC), this protein is 2,4-dinitrotoluene dioxygenase system, ferredoxin component.